We begin with the raw amino-acid sequence, 429 residues long: GTPase Obg (429 aa).

The Obg domain occupies 1–158 (MFVDHVKIYV…LNVILELKVL (158 aa)). The disordered stretch occupies residues 119 to 143 (AGRGGRGNSRFATPANPAPELSEKG). In terms of domain architecture, OBG-type G spans 159–329 (ADVGLVGFPS…LLFAIADLLE (171 aa)). GTP-binding positions include 165–172 (GFPSVGKS), 190–194 (FTTIV), 212–215 (DLPG), 282–285 (NKMD), and 310–312 (SAV). Positions 172 and 192 each coordinate Mg(2+). The OCT domain maps to 351 to 429 (KHEAKGEDFE…LQEFEFEFVD (79 aa)).

This sequence belongs to the TRAFAC class OBG-HflX-like GTPase superfamily. OBG GTPase family. Monomer. The cofactor is Mg(2+).

Its subcellular location is the cytoplasm. In terms of biological role, an essential GTPase which binds GTP, GDP and possibly (p)ppGpp with moderate affinity, with high nucleotide exchange rates and a fairly low GTP hydrolysis rate. Plays a role in control of the cell cycle, stress response, ribosome biogenesis and in those bacteria that undergo differentiation, in morphogenesis control. This is GTPase Obg from Lysinibacillus sphaericus (strain C3-41).